The sequence spans 194 residues: Probable GTP-binding protein EngB (194 aa).

The EngB-type G domain occupies 23–194 (LNGEFVFVGR…YELIEIFGGV (172 aa)). Residues 31–38 (GRSNVGKS), 57–61 (GKTAS), 75–78 (DLPG), 143–146 (TKMD), and 173–175 (YSA) each bind GTP. Positions 38 and 59 each coordinate Mg(2+).

The protein belongs to the TRAFAC class TrmE-Era-EngA-EngB-Septin-like GTPase superfamily. EngB GTPase family. Requires Mg(2+) as cofactor.

Necessary for normal cell division and for the maintenance of normal septation. The protein is Probable GTP-binding protein EngB of Thermosipho africanus (strain TCF52B).